A 328-amino-acid chain; its full sequence is Malate dehydrogenase (328 aa).

12 to 18 (GAAGQIG) contributes to the NAD(+) binding site. Substrate-binding residues include Arg-93 and Arg-99. Residues Asn-106, Gln-113, and 130 to 132 (VGN) each bind NAD(+). Asn-132 and Arg-163 together coordinate substrate. His-188 serves as the catalytic Proton acceptor.

It belongs to the LDH/MDH superfamily. MDH type 2 family.

It carries out the reaction (S)-malate + NAD(+) = oxaloacetate + NADH + H(+). Functionally, catalyzes the reversible oxidation of malate to oxaloacetate. This Saccharopolyspora erythraea (strain ATCC 11635 / DSM 40517 / JCM 4748 / NBRC 13426 / NCIMB 8594 / NRRL 2338) protein is Malate dehydrogenase.